The following is a 569-amino-acid chain: Phenylalanine ammonia-lyase (569 aa).

Tyr-78 serves as the catalytic Proton donor/acceptor. Residues 167 to 169 (ASG) constitute a cross-link (5-imidazolinone (Ala-Gly)). The residue at position 168 (Ser-168) is a 2,3-didehydroalanine (Ser). Residues Asn-223, Gln-311, Arg-317, Asn-347, Lys-419, Glu-448, and Asn-451 each contribute to the (E)-cinnamate site.

Belongs to the PAL/histidase family. As to quaternary structure, homotetramer. Post-translationally, contains an active site 4-methylidene-imidazol-5-one (MIO), which is formed autocatalytically by cyclization and dehydration of residues Ala-Ser-Gly.

The protein localises to the cytoplasm. It carries out the reaction L-phenylalanine = (E)-cinnamate + NH4(+). It participates in phenylpropanoid metabolism; trans-cinnamate biosynthesis; trans-cinnamate from L-phenylalanine: step 1/1. In terms of biological role, catalyzes the non-oxidative deamination of L-phenylalanine to form trans-cinnamic acid, the first step in the phenylpropanoid pathway. This Nostoc punctiforme (strain ATCC 29133 / PCC 73102) protein is Phenylalanine ammonia-lyase.